Consider the following 817-residue polypeptide: MSDLTPMIKQYLKIKEEYKDSILLFRLGDFYETFFEDAKKVSEILQIVLTKRNGNPMAGIPYHALNNYLKRLLDAGYKVAICEQMEDPQSSKGIVDRKVTRILTPGTIIDEGMLEESNRFAALITKNGNLYKIAIFDFSTGDFYLDSFDFKEDELLDFISSFGLVQILLSKELEQLSKKIKNLTNEIYVEILDEWYFSNNFKDHLKETYEVLSLDHLDYDDDELKVADAVLKYLEVTQFSKIKHMRLPKRFKTKNYMFLDSNTIENLGILPTNSNKGKTLYDILKLTKTSMGNRKLREFILTPLTDKENIEERLNKVEHLVEDPLLLEELKEYLASVKDLERISSRISLMKATPKDLIALKDSLEVVPYIIESLTSNPGLSDFFDGVDVLKEAKEFIENTIIEEPAIAPGNGKVIKEGVSGELDEYRNLFNNLDGVLKDIEKREKEKTKISSLKVGRNKIYGFYIEVSKAQSSKVPDNYVRKQTLVNTERYTIKELEEVEQRLALSEEKIKVIEKDIYDKVLTHLSQYVDKIEKLSNKIAELDVFRSFAEVSRVYNYKRPTFVQNSKEIKIINSRHPVVERFVDEFTPNDLFLSEDKFYIILTGPNMSGKSTFIRQIGLISVMAQIGCFVPAEKAEIPIYDGIFTRIGARDDIVSGKSTFLVEMLEVSTILNKATDNSLVLLDEVGRGTSTLDGISVAWAISEYLFQVKRCNTIFATHYTELTYMSHIYEEVAAKRIKVLETMDGVIFLHKIEDGTSDNSYGIEIARLAGFPIEIIERSKEILSQLSNRVDLESRLKRIKNINKKKYESQENQLKMF.

604 to 611 contacts ATP; the sequence is GPNMSGKS.

The protein belongs to the DNA mismatch repair MutS family.

In terms of biological role, this protein is involved in the repair of mismatches in DNA. It is possible that it carries out the mismatch recognition step. This protein has a weak ATPase activity. In Petrotoga mobilis (strain DSM 10674 / SJ95), this protein is DNA mismatch repair protein MutS.